Here is an 86-residue protein sequence, read N- to C-terminus: Small ribosomal subunit protein bS20 (86 aa).

The protein belongs to the bacterial ribosomal protein bS20 family.

Binds directly to 16S ribosomal RNA. The protein is Small ribosomal subunit protein bS20 of Bifidobacterium longum subsp. infantis (strain ATCC 15697 / DSM 20088 / JCM 1222 / NCTC 11817 / S12).